Reading from the N-terminus, the 762-residue chain is Coleoptile phototropism protein 1 (762 aa).

Positions 1–12 are enriched in basic and acidic residues; the sequence is MWESESESHGGE. Residues 1-29 form a disordered region; that stretch reads MWESESESHGGERGLVPVGGGGGSGRHEA. One can recognise a BTB domain in the interval 51 to 128; it reads SDLLVKVGDV…SYGMAVDLTA (78 aa). Residues 227 to 238 show a composition bias toward gly residues; sequence PAAIRGGGGSGG. Disordered regions lie at residues 227-264, 460-495, 687-718, and 731-762; these read PAAIRGGGGSGGTASPRWNVGGGGGGESKESSPSRQAV, MAVASSPGRGDPPPPPQPEYYSGRMPPSSAAAASAS, QVDGRGGGAPSPAAAKIGKQQQQGTSASAWSS, and GADAAAGGGVAPPGGGEAAARKGPRRWRNSIS. In terms of domain architecture, NPH3 spans 268–607; that stretch reads DWWFEDVSVL…VQVLFTEQVK (340 aa). A coiled-coil region spans residues 654–691; that stretch reads AAAKKDINTLKFELESMKAKYLELQHEMDALQKQVDGR. Over residues 696-709 the composition is skewed to low complexity; that stretch reads PSPAAAKIGKQQQQ. Residues 736–747 show a composition bias toward gly residues; that stretch reads AGGGVAPPGGGE. The segment covering 752–762 has biased composition (basic residues); it reads KGPRRWRNSIS.

It belongs to the NPH3 family.

Its pathway is protein modification; protein ubiquitination. In terms of biological role, may act as a substrate-specific adapter of an E3 ubiquitin-protein ligase complex (CUL3-RBX1-BTB) which mediates the ubiquitination and subsequent proteasomal degradation of target proteins. Plays a role as signal transduction component in coleoptile phototropism and lateral translocation of auxin. The protein is Coleoptile phototropism protein 1 (CPT1) of Oryza sativa subsp. japonica (Rice).